The sequence spans 257 residues: Tryptophan synthase alpha chain (257 aa).

Residues glutamate 47 and aspartate 58 each act as proton acceptor in the active site.

Belongs to the TrpA family. In terms of assembly, tetramer of two alpha and two beta chains.

The enzyme catalyses (1S,2R)-1-C-(indol-3-yl)glycerol 3-phosphate + L-serine = D-glyceraldehyde 3-phosphate + L-tryptophan + H2O. It functions in the pathway amino-acid biosynthesis; L-tryptophan biosynthesis; L-tryptophan from chorismate: step 5/5. The alpha subunit is responsible for the aldol cleavage of indoleglycerol phosphate to indole and glyceraldehyde 3-phosphate. The polypeptide is Tryptophan synthase alpha chain (Listeria welshimeri serovar 6b (strain ATCC 35897 / DSM 20650 / CCUG 15529 / CIP 8149 / NCTC 11857 / SLCC 5334 / V8)).